The primary structure comprises 198 residues: dITP/XTP pyrophosphatase (198 aa).

Residue 7 to 12 (TRNAGK) coordinates substrate. Mg(2+)-binding residues include E40 and D69. D69 (proton acceptor) is an active-site residue. Residues S70, 152-155 (FGYD), K175, and 180-181 (HR) contribute to the substrate site.

Belongs to the HAM1 NTPase family. In terms of assembly, homodimer. Mg(2+) is required as a cofactor.

It carries out the reaction XTP + H2O = XMP + diphosphate + H(+). The enzyme catalyses dITP + H2O = dIMP + diphosphate + H(+). The catalysed reaction is ITP + H2O = IMP + diphosphate + H(+). In terms of biological role, pyrophosphatase that catalyzes the hydrolysis of nucleoside triphosphates to their monophosphate derivatives, with a high preference for the non-canonical purine nucleotides XTP (xanthosine triphosphate), dITP (deoxyinosine triphosphate) and ITP. Seems to function as a house-cleaning enzyme that removes non-canonical purine nucleotides from the nucleotide pool, thus preventing their incorporation into DNA/RNA and avoiding chromosomal lesions. This chain is dITP/XTP pyrophosphatase, found in Exiguobacterium sibiricum (strain DSM 17290 / CCUG 55495 / CIP 109462 / JCM 13490 / 255-15).